The primary structure comprises 333 residues: Ketol-acid reductoisomerase (NADP(+)) (333 aa).

One can recognise a KARI N-terminal Rossmann domain in the interval 1-179 (MFYDDNADLS…GGTRAGVIKT (179 aa)). NADP(+) contacts are provided by residues 22-25 (YGSQ), serine 48, serine 50, and 80-83 (DTAQ). Residue histidine 105 is part of the active site. Glycine 131 is a binding site for NADP(+). Residues 180-325 (TFKDETETDL…KKLRDLMSWV (146 aa)) enclose the KARI C-terminal knotted domain. Mg(2+) is bound by residues aspartate 188, glutamate 192, glutamate 224, and glutamate 228. Serine 249 provides a ligand contact to substrate.

Belongs to the ketol-acid reductoisomerase family. Mg(2+) is required as a cofactor.

It carries out the reaction (2R)-2,3-dihydroxy-3-methylbutanoate + NADP(+) = (2S)-2-acetolactate + NADPH + H(+). The enzyme catalyses (2R,3R)-2,3-dihydroxy-3-methylpentanoate + NADP(+) = (S)-2-ethyl-2-hydroxy-3-oxobutanoate + NADPH + H(+). The protein operates within amino-acid biosynthesis; L-isoleucine biosynthesis; L-isoleucine from 2-oxobutanoate: step 2/4. Its pathway is amino-acid biosynthesis; L-valine biosynthesis; L-valine from pyruvate: step 2/4. Involved in the biosynthesis of branched-chain amino acids (BCAA). Catalyzes an alkyl-migration followed by a ketol-acid reduction of (S)-2-acetolactate (S2AL) to yield (R)-2,3-dihydroxy-isovalerate. In the isomerase reaction, S2AL is rearranged via a Mg-dependent methyl migration to produce 3-hydroxy-3-methyl-2-ketobutyrate (HMKB). In the reductase reaction, this 2-ketoacid undergoes a metal-dependent reduction by NADPH to yield (R)-2,3-dihydroxy-isovalerate. The polypeptide is Ketol-acid reductoisomerase (NADP(+)) (Mycobacterium leprae (strain TN)).